Reading from the N-terminus, the 65-residue chain is Sec-independent protein translocase protein TatA (65 aa).

Residues 9 to 29 (ILIIVLLVVVVFGVGKLPQVG) form a helical membrane-spanning segment. Residues 40–65 (RKASTGEDAKEEVETKEETKPAEKSE) are disordered. Residues 43–65 (STGEDAKEEVETKEETKPAEKSE) are compositionally biased toward basic and acidic residues.

This sequence belongs to the TatA/E family. In terms of assembly, forms a complex with TatC.

The protein localises to the cell membrane. Its function is as follows. Part of the twin-arginine translocation (Tat) system that transports large folded proteins containing a characteristic twin-arginine motif in their signal peptide across membranes. TatA could form the protein-conducting channel of the Tat system. This chain is Sec-independent protein translocase protein TatA, found in Dehalococcoides mccartyi (strain ATCC BAA-2100 / JCM 16839 / KCTC 5957 / BAV1).